The chain runs to 141 residues: MAIERTISIIKPDAVGKNVIGKIYSRFEENGLKIVAAKMKQLTLKEAQEFYAVHKDRPFYAGLVEFMTGGPVMIQVLEGENAVLKNRELMGATNPTEAAEGTIRADFATSVSINAVHGSDSVENAALEIAYFFSQTEICPR.

Residues Lys11, Phe59, Arg87, Thr93, Arg104, and Asn114 each contribute to the ATP site. His117 serves as the catalytic Pros-phosphohistidine intermediate.

Belongs to the NDK family. Homotetramer. Mg(2+) serves as cofactor.

The protein resides in the cytoplasm. It carries out the reaction a 2'-deoxyribonucleoside 5'-diphosphate + ATP = a 2'-deoxyribonucleoside 5'-triphosphate + ADP. The catalysed reaction is a ribonucleoside 5'-diphosphate + ATP = a ribonucleoside 5'-triphosphate + ADP. Its function is as follows. Major role in the synthesis of nucleoside triphosphates other than ATP. The ATP gamma phosphate is transferred to the NDP beta phosphate via a ping-pong mechanism, using a phosphorylated active-site intermediate. This chain is Nucleoside diphosphate kinase, found in Neisseria gonorrhoeae (strain NCCP11945).